Consider the following 214-residue polypeptide: MTVKTQLNYQVYNWEGQVSGNADLNLKISKDSGMYLVHRALVKQSNEKRQGSANTKTRSEVRGGGRKPWRQKGTGRARAGSIRSPLWRGGGVIFGPKPRSFAKKMNKKESQLALRTALNNKSVNTLVVENFDTYFQKPKTKLFIEAITRWNLDLNKKLLVIVDKKDLNVYLSIRNLYNVEIISADTLNIMALLAAHKVIITVDALSKIQEVYNG.

The interval 43–80 (KQSNEKRQGSANTKTRSEVRGGGRKPWRQKGTGRARAG) is disordered. Over residues 64 to 75 (GGRKPWRQKGTG) the composition is skewed to basic residues.

Belongs to the universal ribosomal protein uL4 family. Part of the 50S ribosomal subunit.

The protein resides in the plastid. It localises to the chloroplast. In terms of biological role, probably binds the 23S rRNA. The protein is Large ribosomal subunit protein uL4c (rpl4) of Porphyra purpurea (Red seaweed).